A 527-amino-acid chain; its full sequence is DNA polymerase epsilon subunit 2 (527 aa).

Belongs to the DNA polymerase epsilon subunit B family. Component of the DNA polymerase epsilon complex consisting of four subunits: the catalytic subunit POLE and the accessory subunits POLE2, POLE3 and POLE4.

The protein localises to the nucleus. Accessory component of the DNA polymerase epsilon complex. Participates in DNA repair and in chromosomal DNA replication. This Mus musculus (Mouse) protein is DNA polymerase epsilon subunit 2 (Pole2).